Consider the following 298-residue polypeptide: Formylmethanofuran--tetrahydromethanopterin formyltransferase (298 aa).

Belongs to the FTR family. As to quaternary structure, homotetramer.

The protein resides in the cytoplasm. It carries out the reaction N-formylmethanofuran + 5,6,7,8-tetrahydromethanopterin + H(+) = N(5)-formyl-5,6,7,8-tetrahydromethanopterin + methanofuran. Its pathway is one-carbon metabolism; formaldehyde degradation; formate from formaldehyde (H(4)MPT route): step 4/5. Its function is as follows. Catalyzes the transfer of a formyl group from 5-formyl tetrahydromethanopterin (5-formyl-H(4)MPT) to methanofuran (MFR) to produce formylmethanofuran (formyl-MFR) and tetrahydromethanopterin (H(4)MPT). The sequence is that of Formylmethanofuran--tetrahydromethanopterin formyltransferase from Methylococcus capsulatus (strain ATCC 33009 / NCIMB 11132 / Bath).